The primary structure comprises 958 residues: Glycine dehydrogenase (decarboxylating) (958 aa).

An N6-(pyridoxal phosphate)lysine modification is found at K708.

It belongs to the GcvP family. The glycine cleavage system is composed of four proteins: P, T, L and H. The cofactor is pyridoxal 5'-phosphate.

It catalyses the reaction N(6)-[(R)-lipoyl]-L-lysyl-[glycine-cleavage complex H protein] + glycine + H(+) = N(6)-[(R)-S(8)-aminomethyldihydrolipoyl]-L-lysyl-[glycine-cleavage complex H protein] + CO2. Its function is as follows. The glycine cleavage system catalyzes the degradation of glycine. The P protein binds the alpha-amino group of glycine through its pyridoxal phosphate cofactor; CO(2) is released and the remaining methylamine moiety is then transferred to the lipoamide cofactor of the H protein. The sequence is that of Glycine dehydrogenase (decarboxylating) from Photorhabdus laumondii subsp. laumondii (strain DSM 15139 / CIP 105565 / TT01) (Photorhabdus luminescens subsp. laumondii).